Here is a 298-residue protein sequence, read N- to C-terminus: Proline-rich protein 32 (298 aa).

The tract at residues C36–R56 is disordered.

The polypeptide is Proline-rich protein 32 (PRR32) (Homo sapiens (Human)).